Here is a 1355-residue protein sequence, read N- to C-terminus: Ecdysone-induced protein 75B, isoform A (1355 aa).

4 disordered regions span residues 60–91 (QHQPMHQLHHQHQHQHQHQQQAKSQQLKQQHS), 126–228 (RLKN…DSSY), 248–268 (ELEQQQTTGGSNAQQQVEAKP), and 308–344 (ATQQQQQQQQQHQHQQQRRDSSDSNCSLMSNSSNSSA). Basic residues predominate over residues 66–76 (QLHHQHQHQHQ). Composition is skewed to low complexity over residues 77 to 91 (HQQQAKSQQLKQQHS) and 143 to 179 (TLVKTTTTSNSNSNNTQTTNSISQQQQQHQIVLQHQQ). Positions 200-213 (SGIDEDSPNSDEDC) are enriched in acidic residues. Polar residues-rich tracts occupy residues 218–228 (PAGTSLEDSSY) and 254–264 (TTGGSNAQQQV). Low complexity-rich tracts occupy residues 308–321 (ATQQQQQQQQQHQH) and 330–344 (DSNCSLMSNSSNSSA). The nuclear receptor DNA-binding region spans 384–474 (SQLNYLCQKF…VGMSRDAVRF (91 aa)). The NR C4-type; degenerate zinc-finger motif lies at 387 to 421 (NYLCQKFDEKLDTALSNSSANTGRNTPAVTANEDA). The NR C4-type zinc-finger motif lies at 438–457 (CTKNQQCSILRINRNRCQYC). The region spanning 508–756 (DQPRLLAAVL…QQMWSMEDGN (249 aa)) is the NR LBD domain. Disordered stretches follow at residues 780-821 (KSPL…SALA), 927-964 (LDSPTDSGIESGNEKNECKAVSSGGSSSCSSPRSSVDD), 987-1007 (VSVSPVRSPQPSTSSHLKRQI), 1051-1117 (AEAD…SSHS), 1147-1260 (ENST…SNSA), and 1312-1344 (TVTASNGGPPSAAASPAPSSSPPASVGSPNPGL). Composition is skewed to low complexity over residues 797-809 (GSPSSSQPQGVSL), 948-960 (SSGGSSSCSSPRS), 987-1001 (VSVSPVRSPQPSTSS), 1053-1098 (ADAS…AQSQ), and 1106-1117 (SSPKASMASSHS). Composition is skewed to polar residues over residues 1149-1162 (STAASSTTNGVGNR) and 1174-1196 (AVQNQQRWGSSSVITTTCQQRQQ). Composition is skewed to low complexity over residues 1197-1233 (SVSPHSNGSSSSSSSSSSSSSSSSSTSSNCSSSSASS), 1242-1260 (STSNGTSAPASSSSGSNSA), and 1315-1343 (ASNGGPPSAAASPAPSSSPPASVGSPNPG).

It belongs to the nuclear hormone receptor family. NR1 subfamily.

The protein localises to the nucleus. Its function is as follows. Implicated in the regulation of ecdysone-triggered gene hierarchies. Probably plays a key role in mediating the regulation of the larval molt by 20-OH-ecdysone. The chain is Ecdysone-induced protein 75B, isoform A (Eip75B) from Drosophila melanogaster (Fruit fly).